A 175-amino-acid polypeptide reads, in one-letter code: Di-N-acetylchitobiase (175 aa).

The signal sequence occupies residues 1–38 (MARLQLAGSRRLVPLPRRAPRLAPLLLPLLLALPDGAR). The GH18 domain occupies 39 to 175 (ADCPCKVPAL…SFHHEIKGSQ (137 aa)). An N-linked (GlcNAc...) asparagine glycan is attached at asparagine 115. The active-site Proton donor is the glutamate 143.

This sequence belongs to the glycosyl hydrolase 18 family.

The protein resides in the lysosome. Functionally, involved in the degradation of asparagine-linked glycoproteins. Hydrolyze of N-acetyl-beta-D-glucosamine (1-4)N-acetylglucosamine chitobiose core from the reducing end of the bond, it requires prior cleavage by glycosylasparaginase. In Bos taurus (Bovine), this protein is Di-N-acetylchitobiase (CTBS).